The following is a 212-amino-acid chain: Protein irg-1 (212 aa).

As to expression, expressed in the intestine.

In terms of biological role, plays a role in innate immunity by conferring resistance to virulent strains of the Gram-negative bacterium P.aeruginosa via the zip-2 pathway. Can act independently of several immunity-related pathways including pmk-1 p38MAPK, dbl-1 TGF-beta, kgb-1 JNK and bar-1/beta-catenin pathways. The sequence is that of Protein irg-1 from Caenorhabditis elegans.